The following is a 21-amino-acid chain: Neuropeptide gamma (21 aa).

The interval 1–21 (SSANPQITRKRHKINSFVGLM) is disordered. Methionine 21 is subject to Methionine amide.

Belongs to the tachykinin family.

It is found in the secreted. Tachykinins are active peptides which excite neurons, evoke behavioral responses, and contract (directly or indirectly) many smooth muscles. Is a potent vasoconstrictor and secretagogue that plays a regulatory role in the central control of ventilation, in particular, the heart rate variability (HRV). The sequence is that of Neuropeptide gamma from Oncorhynchus mykiss (Rainbow trout).